The sequence spans 291 residues: Segregation and condensation protein A (291 aa).

It belongs to the ScpA family. In terms of assembly, component of a cohesin-like complex composed of ScpA, ScpB and the Smc homodimer, in which ScpA and ScpB bind to the head domain of Smc. The presence of the three proteins is required for the association of the complex with DNA.

The protein localises to the cytoplasm. Functionally, participates in chromosomal partition during cell division. May act via the formation of a condensin-like complex containing Smc and ScpB that pull DNA away from mid-cell into both cell halves. This chain is Segregation and condensation protein A, found in Malacoplasma penetrans (strain HF-2) (Mycoplasma penetrans).